The sequence spans 339 residues: 2-keto-3-deoxygluconate permease (339 aa).

The next 10 helical transmembrane spans lie at 10 to 30 (IPGGMMLVPLFLGALCHTFAP), 42 to 62 (GLISGTVPILAVWFFCMGASI), 77 to 97 (LVVTKIAVAWVVAAVASRILP), 100 to 120 (GVEVGFFAGLSTLALVAAMDM), 141 to 161 (AFVLMSLESGPLMTMVILGTA), 163 to 183 (IASFEPHVFVGAVLPFLVGFA), 199 to 219 (VQTLIPFFAFALGNTIDLSVI), 224 to 244 (LLGVLLGISVIIITGIPLIVA), 254 to 274 (TAGIAASSSAGAAVATPVLIA), and 289 to 309 (TLVATSVIVTSVLVPIITAMW). Residues 315-339 (GGDGTVPKEDAVEEKAEQQRRRIIK) form a disordered region. Basic and acidic residues predominate over residues 320 to 339 (VPKEDAVEEKAEQQRRRIIK).

The protein belongs to the KdgT transporter family.

It is found in the cell inner membrane. The catalysed reaction is 2-dehydro-3-deoxy-D-gluconate(in) + H(+)(in) = 2-dehydro-3-deoxy-D-gluconate(out) + H(+)(out). With respect to regulation, uptake is inhibited by the protonophore uncouplers carbonyl cyanide m-chlorophenylhydrazone (CCCP) and 2,4-dinitrophenol, and by NaN(3). Catalyzes the proton-dependent uptake of 2-keto-3-deoxygluconate (KDG) into the cell. Can also mediate the uptake of glucuronate with a low affinity, and may mediate the uptake of 5-keto-4-deoxyuronate (DKI) and 2,5-diketo-3-deoxygluconate (DKII), which are intermediates in pectin degradation. The chain is 2-keto-3-deoxygluconate permease from Dickeya chrysanthemi (Pectobacterium chrysanthemi).